The chain runs to 501 residues: Dipeptide and tripeptide permease B (501 aa).

Residues 1–27 (MRPSAPTGLLQQPKPFFMIFFVELWER) lie on the Cytoplasmic side of the membrane. A helical transmembrane segment spans residues 28 to 48 (FGYYGVQGILAVFFVQQLGFS). Over 49 to 52 (QEQS) the chain is Periplasmic. Residues 53 to 73 (FITFGAFSALVYGLISVGGYV) traverse the membrane as a helical segment. The Cytoplasmic portion of the chain corresponds to 74-82 (GDHVLGTKR). Residues 83–103 (TMVLGAIVLVIGYFMTGMSIY) traverse the membrane as a helical segment. At 104-106 (NPD) the chain is on the periplasmic side. The chain crosses the membrane as a helical span at residues 107-127 (LIFYALGTIAVGNCLFKANPA). Topologically, residues 128-146 (SLLAKCYERGDPRLDGAFT) are cytoplasmic. The helical transmembrane segment at 147–167 (LFYMSINIGSLISLSLAPVIA) threads the bilayer. The Periplasmic portion of the chain corresponds to 168–172 (DHYGY). A helical transmembrane segment spans residues 173–193 (TVTYNLCGVGLVIALLTFFAC). Over 194–211 (RHMVRDIGSEPDHLPLDY) the chain is Cytoplasmic. Residues 212–232 (GKLLLVLLGSVALVFFCAWLM) form a helical membrane-spanning segment. A topological domain (periplasmic) is located at residue histidine 233. A helical transmembrane segment spans residues 234–254 (HVVIANMVLMTVTLAVVIFFF). Over 255-267 (REAFKLDAVARNK) the chain is Cytoplasmic. The chain crosses the membrane as a helical span at residues 268–288 (MYVAFVLMLEAVVFYVLYAQM). Residues 289–311 (PTSLNFFAINNMHHEMLGMSVNP) lie on the Periplasmic side of the membrane. The chain crosses the membrane as a helical span at residues 312 to 332 (ISFQALNPFWVVVGSPVLAMI). At 333 to 350 (YTRLGSKGRDLTMPLKFT) the chain is on the cytoplasmic side. A helical transmembrane segment spans residues 351 to 371 (LGMLFCSLGFLTAAASGIWFA). Topologically, residues 372–380 (DAQGLTSPW) are periplasmic. Residues 381–401 (FMVLIYLFQSLGELMISALGL) form a helical membrane-spanning segment. The Cytoplasmic portion of the chain corresponds to 402 to 411 (AMVAALVPQR). Residues 412-432 (LMGFILGMWFLTQAMASLLGG) form a helical membrane-spanning segment. The Periplasmic segment spans residues 433-456 (YVATFTAVPQGVTDPLQTLPIYTD). A helical transmembrane segment spans residues 457–477 (VFGKIGLVTLLVAVVMALMVP). The Cytoplasmic portion of the chain corresponds to 478 to 501 (WLNRMMHAGQGEEGEDLLSQQAKA).

The protein belongs to the major facilitator superfamily. Proton-dependent oligopeptide transporter (POT/PTR) (TC 2.A.17) family. DtpB subfamily.

Its subcellular location is the cell inner membrane. In terms of biological role, proton-dependent permease that transports di- and tripeptides. The chain is Dipeptide and tripeptide permease B from Aeromonas hydrophila subsp. hydrophila (strain ATCC 7966 / DSM 30187 / BCRC 13018 / CCUG 14551 / JCM 1027 / KCTC 2358 / NCIMB 9240 / NCTC 8049).